Reading from the N-terminus, the 318-residue chain is 1-aminocyclopropane-1-carboxylate oxidase 1 (318 aa).

The Fe2OG dioxygenase domain maps to 153–254 (PTFGTKVSNY…RMSIASFYNP (102 aa)). His177, Asp179, and His234 together coordinate Fe cation.

Belongs to the iron/ascorbate-dependent oxidoreductase family. It depends on Fe cation as a cofactor. In terms of tissue distribution, fruit.

The catalysed reaction is 1-aminocyclopropane-1-carboxylate + L-ascorbate + O2 = ethene + L-dehydroascorbate + hydrogen cyanide + CO2 + 2 H2O. It functions in the pathway alkene biosynthesis; ethylene biosynthesis via S-adenosyl-L-methionine; ethylene from S-adenosyl-L-methionine: step 2/2. This Cucumis melo (Muskmelon) protein is 1-aminocyclopropane-1-carboxylate oxidase 1 (ACO1).